A 543-amino-acid chain; its full sequence is uncharacterized protein (543 aa).

Positions 1–93 (MSFVTAAPEM…GGAYSSAEAA (93 aa)) constitute a PE domain. The disordered stretch occupies residues 194-214 (GGAGGPGGPTDVPAGTGGAGG).

This sequence belongs to the mycobacterial PE family. PGRS subfamily.

This is an uncharacterized protein from Mycobacterium tuberculosis (strain CDC 1551 / Oshkosh).